The chain runs to 95 residues: Aspartyl/glutamyl-tRNA(Asn/Gln) amidotransferase subunit C (95 aa).

It belongs to the GatC family. As to quaternary structure, heterotrimer of A, B and C subunits.

It catalyses the reaction L-glutamyl-tRNA(Gln) + L-glutamine + ATP + H2O = L-glutaminyl-tRNA(Gln) + L-glutamate + ADP + phosphate + H(+). The catalysed reaction is L-aspartyl-tRNA(Asn) + L-glutamine + ATP + H2O = L-asparaginyl-tRNA(Asn) + L-glutamate + ADP + phosphate + 2 H(+). Allows the formation of correctly charged Asn-tRNA(Asn) or Gln-tRNA(Gln) through the transamidation of misacylated Asp-tRNA(Asn) or Glu-tRNA(Gln) in organisms which lack either or both of asparaginyl-tRNA or glutaminyl-tRNA synthetases. The reaction takes place in the presence of glutamine and ATP through an activated phospho-Asp-tRNA(Asn) or phospho-Glu-tRNA(Gln). In Laribacter hongkongensis (strain HLHK9), this protein is Aspartyl/glutamyl-tRNA(Asn/Gln) amidotransferase subunit C.